Here is a 330-residue protein sequence, read N- to C-terminus: Putative [LysW]-L-2-aminoadipate/[LysW]-L-glutamate phosphate reductase (330 aa).

Residues 10-13 and 34-36 each bind NADP(+); these read SGYI and SRR. The active site involves Cys142. Asn297 is a binding site for NADP(+).

It belongs to the NAGSA dehydrogenase family. Type 1 subfamily. LysY sub-subfamily.

Its subcellular location is the cytoplasm. It carries out the reaction [amino-group carrier protein]-C-terminal-N-(1-carboxy-5-oxopentan-1-yl)-L-glutamine + phosphate + NADP(+) = [amino-group carrier protein]-C-terminal-N-(1-carboxy-5-phosphooxy-5-oxopentan-1-yl)-L-glutamine + NADPH + H(+). The enzyme catalyses [amino-group carrier protein]-C-terminal-gamma-(L-glutamyl-5-semialdehyde)-L-glutamate + phosphate + NADP(+) = [amino-group carrier protein]-C-terminal-gamma-(5-phospho-L-glutamyl)-L-glutamate + NADPH + H(+). It functions in the pathway amino-acid biosynthesis; L-lysine biosynthesis via AAA pathway; L-lysine from L-alpha-aminoadipate (Thermus route): step 3/5. The protein operates within amino-acid biosynthesis; L-arginine biosynthesis. Functionally, involved in both the arginine and lysine biosynthetic pathways. This Thermococcus kodakarensis (strain ATCC BAA-918 / JCM 12380 / KOD1) (Pyrococcus kodakaraensis (strain KOD1)) protein is Putative [LysW]-L-2-aminoadipate/[LysW]-L-glutamate phosphate reductase.